Reading from the N-terminus, the 367-residue chain is 2-oxoisovalerate dehydrogenase subunit alpha (367 aa).

Substrate is bound by residues phenylalanine 66, tyrosine 95, 128–131 (MPEH), and serine 144. Residue 94–96 (YYR) coordinates thiamine diphosphate. Thiamine diphosphate-binding positions include 144-146 (SPI), 174-180 (GDGATSE), 204-208 (NFYAI), and histidine 273. Mg(2+)-binding residues include aspartate 175, asparagine 204, and tyrosine 206.

Belongs to the BCKDHA family. In terms of assembly, heterotetramer of two alpha and two beta chains. Directly associated with ODBB in the E1 complex. The cofactor is thiamine diphosphate.

It carries out the reaction N(6)-[(R)-lipoyl]-L-lysyl-[protein] + 3-methyl-2-oxobutanoate + H(+) = N(6)-[(R)-S(8)-2-methylpropanoyldihydrolipoyl]-L-lysyl-[protein] + CO2. The branched-chain alpha-keto dehydrogenase complex catalyzes the overall conversion of alpha-keto acids to acyl-CoA and CO(2). It contains multiple copies of three enzymatic components: branched-chain alpha-keto acid decarboxylase (E1), lipoamide acyltransferase (E2) and lipoamide dehydrogenase (E3). The protein is 2-oxoisovalerate dehydrogenase subunit alpha of Thermus thermophilus (strain ATCC 27634 / DSM 579 / HB8).